The chain runs to 425 residues: Septin-11 (425 aa).

Alanine 2 is subject to N-acetylalanine. A Phosphoserine modification is found at serine 9. Residues 38–304 (QGFCFNILCV…ELYRRCKLEE (267 aa)) enclose the Septin-type G domain. Residues 48–55 (GETGIGKS) form a G1 motif region. GTP is bound by residues 48-55 (GETGIGKS), glycine 103, 184-192 (KADTIAKNE), glycine 238, and arginine 253. The tract at residues 100 to 103 (DTVG) is G3 motif. The G4 motif stretch occupies residues 183 to 186 (AKAD). Positions 320-410 (QETYEAKRNE…AAQLLQSQAQ (91 aa)) form a coiled coil. Residues 399–425 (KAAAQLLQSQAQQSGAQQTKKDKDKKN) form a disordered region. Residues 401–416 (AAQLLQSQAQQSGAQQ) show a composition bias toward low complexity.

The protein belongs to the TRAFAC class TrmE-Era-EngA-EngB-Septin-like GTPase superfamily. Septin GTPase family. As to quaternary structure, septins polymerize into heterooligomeric protein complexes that form filaments, and can associate with cellular membranes, actin filaments and microtubules. Forms homooligomers. GTPase activity is required for filament formation. Interacts with SEPTIN7, SEPTIN9 and SEPTIN12.

Its subcellular location is the cytoplasm. The protein localises to the cytoskeleton. It localises to the synapse. The protein resides in the cell projection. It is found in the dendritic spine. Its subcellular location is the axon. Filament-forming cytoskeletal GTPase. May play a role in cytokinesis (Potential). May play a role in the cytoarchitecture of neurons, including dendritic arborization and dendritic spines, and in GABAergic synaptic connectivity. This chain is Septin-11, found in Bos taurus (Bovine).